A 396-amino-acid chain; its full sequence is Elongation factor Tu (396 aa).

A tr-type G domain is found at 10–206 (KPHVNVGTIG…ALDTYIPEPE (197 aa)). The segment at 19–26 (GHVDHGKT) is G1. 19 to 26 (GHVDHGKT) serves as a coordination point for GTP. Residue T26 coordinates Mg(2+). The segment at 60 to 64 (GITIN) is G2. The G3 stretch occupies residues 81-84 (DCPG). Residues 81–85 (DCPGH) and 136–139 (NKCD) contribute to the GTP site. A G4 region spans residues 136–139 (NKCD). Residues 174–176 (SAL) are G5.

It belongs to the TRAFAC class translation factor GTPase superfamily. Classic translation factor GTPase family. EF-Tu/EF-1A subfamily. As to quaternary structure, monomer.

It is found in the cytoplasm. The catalysed reaction is GTP + H2O = GDP + phosphate + H(+). Functionally, GTP hydrolase that promotes the GTP-dependent binding of aminoacyl-tRNA to the A-site of ribosomes during protein biosynthesis. This is Elongation factor Tu from Acinetobacter baylyi (strain ATCC 33305 / BD413 / ADP1).